Here is a 282-residue protein sequence, read N- to C-terminus: 3-methyl-2-oxobutanoate hydroxymethyltransferase (282 aa).

Mg(2+)-binding residues include aspartate 44 and aspartate 83. 3-methyl-2-oxobutanoate contacts are provided by residues 44–45 (DS), aspartate 83, and lysine 112. Glutamate 114 contributes to the Mg(2+) binding site. Glutamate 181 functions as the Proton acceptor in the catalytic mechanism.

Belongs to the PanB family. Homodecamer; pentamer of dimers. It depends on Mg(2+) as a cofactor.

It is found in the cytoplasm. It catalyses the reaction 3-methyl-2-oxobutanoate + (6R)-5,10-methylene-5,6,7,8-tetrahydrofolate + H2O = 2-dehydropantoate + (6S)-5,6,7,8-tetrahydrofolate. Its pathway is cofactor biosynthesis; coenzyme A biosynthesis. In terms of biological role, catalyzes the reversible reaction in which hydroxymethyl group from 5,10-methylenetetrahydrofolate is transferred onto alpha-ketoisovalerate to form ketopantoate. The chain is 3-methyl-2-oxobutanoate hydroxymethyltransferase from Pyrococcus abyssi (strain GE5 / Orsay).